The sequence spans 359 residues: Malonyl-CoA reductase (359 aa).

16–19 (TGLV) serves as a coordination point for NADP(+). Cys-153 serves as the catalytic Acyl-thioester intermediate. 183–184 (SG) serves as a coordination point for NADP(+). The Proton acceptor role is filled by His-248. 335–336 (NT) contacts NADP(+).

The protein belongs to the aspartate-semialdehyde dehydrogenase family. Homodimer and possibly a tetramer. Mg(2+) is required as a cofactor. It depends on Mn(2+) as a cofactor.

The enzyme catalyses 3-oxopropanoate + NADP(+) + CoA = malonyl-CoA + NADPH + H(+). Activated by dithioerythritol (5 mM) and inhibited by the thiol-blocking agent iodoacetamide (0.1 mM). Functionally, catalyzes the reduction of malonyl-CoA to malonate semialdehyde, a key step in the 3-hydroxypropanoate and the 3-hydroxypropanoate/4-hydroxybutyrate cycles. Can also use succinyl-CoA and succinate semialdehyde as substrates but at a lower rate than malonyl-CoA. This is Malonyl-CoA reductase (mcr) from Sulfurisphaera tokodaii (strain DSM 16993 / JCM 10545 / NBRC 100140 / 7) (Sulfolobus tokodaii).